Consider the following 747-residue polypeptide: Histone-lysine N-methyltransferase EZH1 (747 aa).

A disordered region spans residues 188-231 (DEEEDGHNDPSDGKQDDSKEDLPVTRKRKRHAIEGNKKSSKKQF). Residues 194 to 211 (HNDPSDGKQDDSKEDLPV) show a composition bias toward basic and acidic residues. Lys-327 participates in a covalent cross-link: Glycyl lysine isopeptide (Lys-Gly) (interchain with G-Cter in SUMO2). The tract at residues 368–414 (VSASCSNASASAMAETKEGDSDRDTGNDWASSSSEANSRCQTPTKQK) is disordered. Residues 369 to 381 (SASCSNASASAMA) are compositionally biased toward low complexity. Over residues 382-393 (ETKEGDSDRDTG) the composition is skewed to basic and acidic residues. Positions 395 to 414 (DWASSSSEANSRCQTPTKQK) are enriched in polar residues. The Nuclear localization signal signature appears at 491 to 496 (QKKKRK). The CXC domain occupies 504–606 (CRKIQLKKDN…CKVVSCKNCS (103 aa)). The 116-residue stretch at 613 to 728 (KHLLLAPSDV…AGEELFFDYR (116 aa)) folds into the SET domain.

The protein belongs to the class V-like SAM-binding methyltransferase superfamily. Histone-lysine methyltransferase family. EZ subfamily. As to quaternary structure, component of the PRC2/EED-EZH1 complex, which includes EED, EZH1, SUZ12, RBBP4 and AEBP2. The PRC2/EED-EZH1 is less abundant than the PRC2/EED-EZH2 complex, has weak methyltransferase activity and compacts chromatin in the absence of the methyltransferase cofactor S-adenosyl-L-methionine (SAM). Interacts with EZHIP; the interaction blocks EZH1 methyltransferase activity. As to expression, expressed at high levels in kidney, adrenal gland, testis and brain.

It is found in the nucleus. It catalyses the reaction L-lysyl(27)-[histone H3] + 3 S-adenosyl-L-methionine = N(6),N(6),N(6)-trimethyl-L-lysyl(27)-[histone H3] + 3 S-adenosyl-L-homocysteine + 3 H(+). Polycomb group (PcG) protein. Catalytic subunit of the PRC2/EED-EZH1 complex, which methylates 'Lys-27' of histone H3, leading to transcriptional repression of the affected target gene. Able to mono-, di- and trimethylate 'Lys-27' of histone H3 to form H3K27me1, H3K27me2 and H3K27me3, respectively. Required for embryonic stem cell derivation and self-renewal, suggesting that it is involved in safeguarding embryonic stem cell identity. Compared to EZH2-containing complexes, it is less abundant in embryonic stem cells, has weak methyltransferase activity and plays a less critical role in forming H3K27me3, which is required for embryonic stem cell identity and proper differentiation. In Mus musculus (Mouse), this protein is Histone-lysine N-methyltransferase EZH1 (Ezh1).